A 234-amino-acid chain; its full sequence is Sugar fermentation stimulation protein A (234 aa).

Positions 201-220 (LLSEAQNKGVEVLAYKAELS) form a DNA-binding region, H-T-H motif.

Belongs to the SfsA family.

Binds to DNA non-specifically. Could be a regulatory factor involved in maltose metabolism. The sequence is that of Sugar fermentation stimulation protein A from Salmonella arizonae (strain ATCC BAA-731 / CDC346-86 / RSK2980).